Consider the following 122-residue polypeptide: MEIQEISKLAIEALEDIKGKDIIELDTSKLTSLFQRMIVATGDSNRQVKALANSVQVKLKEAGVDIVGSEGHESGEWVLVDAGDVVVHVMLPAVRDYYDIEALWGGQKPSFAVGAAKPWSAV.

This sequence belongs to the Iojap/RsfS family. As to quaternary structure, interacts with ribosomal protein uL14 (rplN).

The protein localises to the cytoplasm. Functionally, functions as a ribosomal silencing factor. Interacts with ribosomal protein uL14 (rplN), blocking formation of intersubunit bridge B8. Prevents association of the 30S and 50S ribosomal subunits and the formation of functional ribosomes, thus repressing translation. The polypeptide is Ribosomal silencing factor RsfS (Chromobacterium violaceum (strain ATCC 12472 / DSM 30191 / JCM 1249 / CCUG 213 / NBRC 12614 / NCIMB 9131 / NCTC 9757 / MK)).